We begin with the raw amino-acid sequence, 299 residues long: GTPase Era (299 aa).

Residues 5–172 (KSGFVSIIGR…IDVLKSFLPE (168 aa)) form the Era-type G domain. A G1 region spans residues 13–20 (GRPNVGKS). Residue 13 to 20 (GRPNVGKS) participates in GTP binding. Positions 39 to 43 (QTTRN) are G2. The segment at 60 to 63 (DTPG) is G3. Residues 60–64 (DTPGI) and 122–125 (NKID) contribute to the GTP site. The tract at residues 122 to 125 (NKID) is G4. The G5 stretch occupies residues 151–153 (ISA). The KH type-2 domain maps to 203–280 (TSEEIPHAIG…YLELWVKVQR (78 aa)).

It belongs to the TRAFAC class TrmE-Era-EngA-EngB-Septin-like GTPase superfamily. Era GTPase family. In terms of assembly, monomer.

The protein localises to the cytoplasm. The protein resides in the cell membrane. An essential GTPase that binds both GDP and GTP, with rapid nucleotide exchange. Plays a role in 16S rRNA processing and 30S ribosomal subunit biogenesis and possibly also in cell cycle regulation and energy metabolism. This Staphylococcus epidermidis (strain ATCC 12228 / FDA PCI 1200) protein is GTPase Era.